Here is a 369-residue protein sequence, read N- to C-terminus: Anhydro-N-acetylmuramic acid kinase (369 aa).

12–19 lines the ATP pocket; sequence GTSMDGVD.

The protein belongs to the anhydro-N-acetylmuramic acid kinase family.

The catalysed reaction is 1,6-anhydro-N-acetyl-beta-muramate + ATP + H2O = N-acetyl-D-muramate 6-phosphate + ADP + H(+). It participates in amino-sugar metabolism; 1,6-anhydro-N-acetylmuramate degradation. The protein operates within cell wall biogenesis; peptidoglycan recycling. Its function is as follows. Catalyzes the specific phosphorylation of 1,6-anhydro-N-acetylmuramic acid (anhMurNAc) with the simultaneous cleavage of the 1,6-anhydro ring, generating MurNAc-6-P. Is required for the utilization of anhMurNAc either imported from the medium or derived from its own cell wall murein, and thus plays a role in cell wall recycling. The polypeptide is Anhydro-N-acetylmuramic acid kinase (Shewanella putrefaciens (strain CN-32 / ATCC BAA-453)).